The chain runs to 331 residues: Pantothenate kinase (331 aa).

Position 109–116 (109–116 (GSVAVGKS)) interacts with ATP.

Belongs to the prokaryotic pantothenate kinase family.

Its subcellular location is the cytoplasm. The enzyme catalyses (R)-pantothenate + ATP = (R)-4'-phosphopantothenate + ADP + H(+). The protein operates within cofactor biosynthesis; coenzyme A biosynthesis; CoA from (R)-pantothenate: step 1/5. This chain is Pantothenate kinase, found in Sinorhizobium medicae (strain WSM419) (Ensifer medicae).